A 360-amino-acid chain; its full sequence is Protein Wnt-2 (360 aa).

The first 25 residues, 1-25 (MNAPLGGIWLWLPLLLTWLTPEVNS), serve as a signal peptide directing secretion. Intrachain disulfides connect Cys-76/Cys-87, Cys-127/Cys-135, Cys-137/Cys-157, Cys-206/Cys-220, Cys-208/Cys-215, Cys-278/Cys-309, Cys-294/Cys-304, Cys-308/Cys-348, Cys-324/Cys-339, Cys-326/Cys-336, and Cys-331/Cys-332. Ser-212 carries the O-palmitoleoyl serine; by PORCN lipid modification. Residue Asn-295 is glycosylated (N-linked (GlcNAc...) asparagine).

This sequence belongs to the Wnt family. Palmitoleoylation is required for efficient binding to frizzled receptors. Depalmitoleoylation leads to Wnt signaling pathway inhibition.

It localises to the secreted. Its subcellular location is the extracellular space. The protein resides in the extracellular matrix. Ligand for members of the frizzled family of seven transmembrane receptors. Functions in the canonical Wnt signaling pathway that results in activation of transcription factors of the TCF/LEF family. Functions as a upstream regulator of FGF10 expression. Plays an important role in embryonic lung development. May contribute to embryonic brain development by regulating the proliferation of dopaminergic precursors and neurons. This Gorilla gorilla gorilla (Western lowland gorilla) protein is Protein Wnt-2 (WNT2).